The primary structure comprises 321 residues: Protease HtpX homolog (321 aa).

2 helical membrane passes run 6–26 (TAML…LIGG) and 28–48 (GGMM…YWNS). Residue His-130 participates in Zn(2+) binding. Glu-131 is a catalytic residue. Zn(2+) is bound at residue His-134. The next 2 membrane-spanning stretches (helical) occupy residues 145-165 (ITAT…FFGG) and 173-193 (PLGF…AMLV). Position 202 (Glu-202) interacts with Zn(2+). The segment at 281–321 (EFSPRASTPPPSGDRPVRKSGSVPTTGWRRGNENERKGPWS) is disordered. The span at 310-321 (RGNENERKGPWS) shows a compositional bias: basic and acidic residues.

This sequence belongs to the peptidase M48B family. The cofactor is Zn(2+).

Its subcellular location is the cell inner membrane. The polypeptide is Protease HtpX homolog (Agrobacterium fabrum (strain C58 / ATCC 33970) (Agrobacterium tumefaciens (strain C58))).